A 704-amino-acid chain; its full sequence is Metabotropic glutamate receptor-like protein K (704 aa).

An N-terminal signal peptide occupies residues 1–21 (MIKLILSIILIICFIINSIES). The Extracellular portion of the chain corresponds to 22–383 (FKMITLTTGP…SKVEFQRSIQ (362 aa)). Asn66, Asn104, Asn256, Asn286, Asn308, Asn337, Asn343, and Asn368 each carry an N-linked (GlcNAc...) asparagine glycan. A helical membrane pass occupies residues 384-404 (IGFSIVSGLLIGFVILMMIGI). Residues 405–419 (VKYQDTPSIRSASPS) lie on the Cytoplasmic side of the membrane. Residues 420–440 (FLNLTLLGGVIIFIGIIVWVA) form a helical membrane-spanning segment. The Extracellular portion of the chain corresponds to 441–455 (PISTHQCNARFWLVT). Residues 456 to 476 (IGFSTLIGSLVVKNIRIWLIF) traverse the membrane as a helical segment. Residues 477 to 492 (DNPELKIRTITNNQLY) lie on the Cytoplasmic side of the membrane. Residues 493 to 513 (PWVGLCLVINIVLMSIITTVG) traverse the membrane as a helical segment. The Extracellular segment spans residues 514-541 (DLKAIEAQGIDSLGKFEYMTICKMNYTG). Asn538 carries an N-linked (GlcNAc...) asparagine glycan. The helical transmembrane segment at 542 to 562 (AATLYSILAYFGTLLLVGVFV) threads the bilayer. At 563-578 (SWKIRIVHIEEFSECT) the chain is on the cytoplasmic side. A helical transmembrane segment spans residues 579-599 (AIAKTLYSISFCLFVIVPLMI). Residues 600–608 (SPQDKQSET) lie on the Extracellular side of the membrane. The chain crosses the membrane as a helical span at residues 609 to 629 (IILCVTGIFITTGALLIFFLP). The Cytoplasmic segment spans residues 630–704 (KFWRIFGNEK…NESSLSNETK (75 aa)). Disordered stretches follow at residues 657–677 (ARAESANRNNSSNSFGFSKSS) and 685–704 (SGIESLNDDSNESSLSNETK).

This sequence in the N-terminal section; belongs to the BMP lipoprotein family. In the C-terminal section; belongs to the G-protein coupled receptor 3 family. GABA-B receptor subfamily.

The protein localises to the membrane. The chain is Metabotropic glutamate receptor-like protein K (grlK) from Dictyostelium discoideum (Social amoeba).